Here is a 215-residue protein sequence, read N- to C-terminus: N-(5'-phosphoribosyl)anthranilate isomerase (215 aa).

The protein belongs to the TrpF family.

It catalyses the reaction N-(5-phospho-beta-D-ribosyl)anthranilate = 1-(2-carboxyphenylamino)-1-deoxy-D-ribulose 5-phosphate. It participates in amino-acid biosynthesis; L-tryptophan biosynthesis; L-tryptophan from chorismate: step 3/5. This is N-(5'-phosphoribosyl)anthranilate isomerase from Ruegeria sp. (strain TM1040) (Silicibacter sp.).